The chain runs to 682 residues: Methionine--tRNA ligase (682 aa).

Positions 15–25 (PYANGAIHLGH) match the 'HIGH' region motif. Positions 146, 149, 159, and 162 each coordinate Zn(2+). A 'KMSKS' region motif is present at residues 331–335 (KMSKS). ATP is bound at residue Lys-334. Residues 580–682 (DLAKLDMRVA…NGVTAGMQVK (103 aa)) enclose the tRNA-binding domain.

Belongs to the class-I aminoacyl-tRNA synthetase family. MetG type 1 subfamily. As to quaternary structure, homodimer. Requires Zn(2+) as cofactor.

It localises to the cytoplasm. It catalyses the reaction tRNA(Met) + L-methionine + ATP = L-methionyl-tRNA(Met) + AMP + diphosphate. Functionally, is required not only for elongation of protein synthesis but also for the initiation of all mRNA translation through initiator tRNA(fMet) aminoacylation. The sequence is that of Methionine--tRNA ligase from Haemophilus influenzae (strain 86-028NP).